The primary structure comprises 220 residues: WAP four-disulfide core domain protein 1 (220 aa).

A signal peptide spans 1–31 (MPLTGVGPGSCRRQIIRALCLLLLLLHAGSA). The disordered stretch occupies residues 46 to 70 (KSRAEEAGAPGGPRQPRADRCPPPP). The region spanning 59-108 (RQPRADRCPPPPRTLPPGACQAARCQADSECPRHRRCCYNGCAYACLEAV) is the WAP domain. 4 disulfides stabilise this stretch: Cys66-Cys96, Cys78-Cys100, Cys83-Cys95, and Cys89-Cys104. The segment at 199-220 (EYPEGDSKNVAEPGRGQQKHFQ) is disordered.

It localises to the secreted. In terms of biological role, has growth inhibitory activity. The protein is WAP four-disulfide core domain protein 1 (WFDC1) of Homo sapiens (Human).